The sequence spans 163 residues: 3-dehydroquinate dehydratase (163 aa).

Catalysis depends on Y28, which acts as the Proton acceptor. Substrate is bound by residues N80, H86, and D93. H106 serves as the catalytic Proton donor. Substrate is bound by residues 107 to 108 (IS) and R117.

Belongs to the type-II 3-dehydroquinase family. In terms of assembly, homododecamer.

It catalyses the reaction 3-dehydroquinate = 3-dehydroshikimate + H2O. The protein operates within metabolic intermediate biosynthesis; chorismate biosynthesis; chorismate from D-erythrose 4-phosphate and phosphoenolpyruvate: step 3/7. Catalyzes a trans-dehydration via an enolate intermediate. The chain is 3-dehydroquinate dehydratase from Bradyrhizobium sp. (strain BTAi1 / ATCC BAA-1182).